A 401-amino-acid polypeptide reads, in one-letter code: Nicotinate phosphoribosyltransferase (401 aa).

H224 is modified (phosphohistidine; by autocatalysis).

Belongs to the NAPRTase family. Post-translationally, transiently phosphorylated on a His residue during the reaction cycle. Phosphorylation strongly increases the affinity for substrates and increases the rate of nicotinate D-ribonucleotide production. Dephosphorylation regenerates the low-affinity form of the enzyme, leading to product release.

The enzyme catalyses nicotinate + 5-phospho-alpha-D-ribose 1-diphosphate + ATP + H2O = nicotinate beta-D-ribonucleotide + ADP + phosphate + diphosphate. The protein operates within cofactor biosynthesis; NAD(+) biosynthesis; nicotinate D-ribonucleotide from nicotinate: step 1/1. Catalyzes the synthesis of beta-nicotinate D-ribonucleotide from nicotinate and 5-phospho-D-ribose 1-phosphate at the expense of ATP. In Pseudomonas putida (strain ATCC 700007 / DSM 6899 / JCM 31910 / BCRC 17059 / LMG 24140 / F1), this protein is Nicotinate phosphoribosyltransferase.